Here is a 307-residue protein sequence, read N- to C-terminus: Ninja-family protein 5 (307 aa).

Disordered regions lie at residues 1-159 and 173-208; these read MASR…EHTV and TAGS…EPQP. Residues 8 to 30 show a composition bias toward gly residues; sequence GGFGRDGGQAPVGGAGAAPGPGG. 2 stretches are compositionally biased toward polar residues: residues 63 to 83 and 173 to 183; these read QRSS…GTSC and TAGSPTPSRPQ.

Belongs to the Ninja family.

The protein resides in the nucleus. In Zea mays (Maize), this protein is Ninja-family protein 5.